The sequence spans 71 residues: Calcium dodecin (71 aa).

E18 lines the Ca(2+) pocket.

It belongs to the dodecin family. In terms of assembly, homododecamer; 12 subunits assemble to form a hollow sphere with a diameter of about 75 Angstroms. Calcium ions are bound at the interface between three subunits.

Binds calcium ions. May play a role in sequestering additional small ligands. The chain is Calcium dodecin (secE2) from Mycobacterium tuberculosis (strain ATCC 25618 / H37Rv).